Here is a 661-residue protein sequence, read N- to C-terminus: UvrABC system protein B (661 aa).

The 158-residue stretch at alanine 25–arginine 182 folds into the Helicase ATP-binding domain. Glycine 38–threonine 45 contacts ATP. The Beta-hairpin signature appears at tyrosine 91–isoleucine 114. One can recognise a Helicase C-terminal domain in the interval glutamine 430 to isoleucine 592. Positions lysine 621 to alanine 656 constitute a UVR domain.

Belongs to the UvrB family. As to quaternary structure, forms a heterotetramer with UvrA during the search for lesions. Interacts with UvrC in an incision complex.

It is found in the cytoplasm. Functionally, the UvrABC repair system catalyzes the recognition and processing of DNA lesions. A damage recognition complex composed of 2 UvrA and 2 UvrB subunits scans DNA for abnormalities. Upon binding of the UvrA(2)B(2) complex to a putative damaged site, the DNA wraps around one UvrB monomer. DNA wrap is dependent on ATP binding by UvrB and probably causes local melting of the DNA helix, facilitating insertion of UvrB beta-hairpin between the DNA strands. Then UvrB probes one DNA strand for the presence of a lesion. If a lesion is found the UvrA subunits dissociate and the UvrB-DNA preincision complex is formed. This complex is subsequently bound by UvrC and the second UvrB is released. If no lesion is found, the DNA wraps around the other UvrB subunit that will check the other stand for damage. The protein is UvrABC system protein B of Rickettsia rickettsii (strain Sheila Smith).